The primary structure comprises 381 residues: MAKKQKKLDDITKKFGDEREKALNDALKLIEKDFGKGSIMRLGERAEQKVQVMSSGSLALDIALGAGGYPKGRIIEIYGPESSGKTTVALHAVAQAQKEGGIAAFIDAEHALDPSYAAALGVNIDELLLSQPDSGEQGLEIAGKLIDSGAVDLVVVDSVAALVPRAEIDGDIGDSHVGLQARMMSQAMRKLGASINKTKTIAIFINQLREKVGVMFGNPETTPGGRALKFYASVRLDVRGNTQIKGTGDQKDTNVGKETKIKVVKNKVAPPFKEAMVEIMYGEGISRTGELVKIATDLDIIQKAGAWYSYNGEKIGQGSENAKKFLADHPEIFDEIDHKVRVHFGLIEKDEAVKSLDKTEEAAPVVEEVTLDLDDAIEIED.

An ATP-binding site is contributed by 79-86 (GPESSGKT).

The protein belongs to the RecA family.

Its subcellular location is the cytoplasm. Functionally, can catalyze the hydrolysis of ATP in the presence of single-stranded DNA, the ATP-dependent uptake of single-stranded DNA by duplex DNA, and the ATP-dependent hybridization of homologous single-stranded DNAs. It interacts with LexA causing its activation and leading to its autocatalytic cleavage. The sequence is that of Protein RecA from Streptococcus parasanguinis.